The following is a 502-amino-acid chain: ATP synthase subunit alpha (502 aa).

G169–T176 is a binding site for ATP.

It belongs to the ATPase alpha/beta chains family. F-type ATPases have 2 components, CF(1) - the catalytic core - and CF(0) - the membrane proton channel. CF(1) has five subunits: alpha(3), beta(3), gamma(1), delta(1), epsilon(1). CF(0) has three main subunits: a(1), b(2) and c(9-12). The alpha and beta chains form an alternating ring which encloses part of the gamma chain. CF(1) is attached to CF(0) by a central stalk formed by the gamma and epsilon chains, while a peripheral stalk is formed by the delta and b chains.

The protein resides in the cell membrane. It catalyses the reaction ATP + H2O + 4 H(+)(in) = ADP + phosphate + 5 H(+)(out). Functionally, produces ATP from ADP in the presence of a proton gradient across the membrane. The alpha chain is a regulatory subunit. The polypeptide is ATP synthase subunit alpha (Clostridium perfringens (strain SM101 / Type A)).